The primary structure comprises 396 residues: NADH-quinone oxidoreductase subunit D 1 (396 aa).

This sequence belongs to the complex I 49 kDa subunit family. As to quaternary structure, NDH-1 is composed of 14 different subunits. Subunits NuoB, C, D, E, F, and G constitute the peripheral sector of the complex.

Its subcellular location is the cell inner membrane. The catalysed reaction is a quinone + NADH + 5 H(+)(in) = a quinol + NAD(+) + 4 H(+)(out). Functionally, NDH-1 shuttles electrons from NADH, via FMN and iron-sulfur (Fe-S) centers, to quinones in the respiratory chain. The immediate electron acceptor for the enzyme in this species is believed to be ubiquinone. Couples the redox reaction to proton translocation (for every two electrons transferred, four hydrogen ions are translocated across the cytoplasmic membrane), and thus conserves the redox energy in a proton gradient. The chain is NADH-quinone oxidoreductase subunit D 1 from Rhizobium etli (strain CIAT 652).